A 28-amino-acid polypeptide reads, in one-letter code: U-actitoxin-Ate1 (28 aa).

An N-terminal signal peptide occupies residues 1–15; that stretch reads MSLILIFFAFTVLKS. Residues C20 and C26 are joined by a disulfide bond.

As to quaternary structure, monomer in solution. In terms of processing, may be N-glycosylated at Asn-22. Activity with this modification has not be tested. In terms of tissue distribution, highly expressed in the tentacles. Weakly expressed in acrorhagi and mesenteric filaments.

The protein resides in the secreted. It localises to the nematocyst. Functionally, probable toxin expected to be employed in prey capture and/or defense against predators (based on its abundance in tentacles). Has only a weak affinity for lipid membranes. Shows moderate cytotoxic activity against breast cancer cell lines (MCF-7 and MDA-MB-231). In Actinia tenebrosa (Australian red waratah sea anemone), this protein is U-actitoxin-Ate1.